The chain runs to 231 residues: MIP18 family protein YHR122W (231 aa).

Disordered regions lie at residues 1–26 and 75–100; these read MSEF…DSTK and LTSD…EEEE. An N-acetylserine modification is found at Ser2. Over residues 76–90 the composition is skewed to acidic residues; the sequence is TSDEDSLPAESEDES.

Belongs to the MIP18 family.

Functionally, may play a role in chromosome segregation through establishment of sister chromatid cohesion. This chain is MIP18 family protein YHR122W, found in Saccharomyces cerevisiae (strain ATCC 204508 / S288c) (Baker's yeast).